Consider the following 253-residue polypeptide: Chloride intracellular channel protein 4 (253 aa).

Alanine 2 carries the post-translational modification N-acetylalanine. Residues 2–101 (ALSMPLNGLK…EEFLEEVLCP (100 aa)) are required for insertion into the membrane. Residue serine 4 is modified to Phosphoserine. Lysine 24 is subject to N6-acetyllysine. The short motif at 35 to 38 (CPFS) is the G-site element. A helical membrane pass occupies residues 37–57 (FSQRLFMILWLKGVVFSVTTV). The GST C-terminal domain maps to 81–244 (NSEVKTDVNK…PSDKEVEIAY (164 aa)). An N6-acetyllysine modification is found at lysine 130. Phosphoserine occurs at positions 132, 167, and 236. Residue tyrosine 244 is modified to Phosphotyrosine.

It belongs to the chloride channel CLIC family. In terms of assembly, monomer. Interacts with HRH30. Interacts with AKAP9. Detected in blood vessels in the retina (at protein level). Expressed to the greatest extent in vivo in heart, lung, liver, kidney, and skin.

Its subcellular location is the cytoplasm. It is found in the cytoskeleton. It localises to the microtubule organizing center. The protein localises to the centrosome. The protein resides in the cytoplasmic vesicle membrane. Its subcellular location is the nucleus. It is found in the cell membrane. It localises to the mitochondrion. The protein localises to the cell junction. It catalyses the reaction chloride(in) = chloride(out). It carries out the reaction thiocyanate(in) = thiocyanate(out). The catalysed reaction is nitrate(in) = nitrate(out). The enzyme catalyses iodide(out) = iodide(in). It catalyses the reaction bromide(in) = bromide(out). It carries out the reaction fluoride(in) = fluoride(out). The catalysed reaction is choline(out) = choline(in). Functionally, in the soluble state, catalyzes glutaredoxin-like thiol disulfide exchange reactions with reduced glutathione as electron donor. Can insert into membranes and form voltage-dependent multi-ion conductive channels. Membrane insertion seems to be redox-regulated and may occur only under oxidizing conditions. Has alternate cellular functions like a potential role in angiogenesis or in maintaining apical-basolateral membrane polarity during mitosis and cytokinesis. Could also promote endothelial cell proliferation and regulate endothelial morphogenesis (tubulogenesis). Promotes cell-surface expression of HRH3. This chain is Chloride intracellular channel protein 4 (Clic4), found in Mus musculus (Mouse).